A 603-amino-acid chain; its full sequence is Penicillin-binding protein activator LpoA (603 aa).

The N-terminal stretch at 1–26 (MAMNHHQRRSVPRLLTPIALSIVLSA) is a signal peptide. Residue C27 is the site of N-palmitoyl cysteine attachment. C27 is lipidated: S-diacylglycerol cysteine.

The protein belongs to the LpoA family. Interacts with PBP1a.

It localises to the cell outer membrane. In terms of biological role, regulator of peptidoglycan synthesis that is essential for the function of penicillin-binding protein 1A (PBP1a). The polypeptide is Penicillin-binding protein activator LpoA (Vibrio cholerae serotype O1 (strain ATCC 39541 / Classical Ogawa 395 / O395)).